We begin with the raw amino-acid sequence, 424 residues long: tRNA modification GTPase MnmE (424 aa).

Residues Arg20, Glu77, and Arg117 each coordinate (6S)-5-formyl-5,6,7,8-tetrahydrofolate. Positions 212 to 351 (GVRVVFAGPP…LVRDLRDAAR (140 aa)) constitute a TrmE-type G domain. Asn222 provides a ligand contact to K(+). Residues 222–227 (NAGKST), 241–247 (SPIAGTT), and 266–269 (DTAG) contribute to the GTP site. A Mg(2+)-binding site is contributed by Ser226. K(+)-binding residues include Ser241, Ile243, and Thr246. Residue Thr247 participates in Mg(2+) binding. Lys424 is a binding site for (6S)-5-formyl-5,6,7,8-tetrahydrofolate.

This sequence belongs to the TRAFAC class TrmE-Era-EngA-EngB-Septin-like GTPase superfamily. TrmE GTPase family. In terms of assembly, homodimer. Heterotetramer of two MnmE and two MnmG subunits. K(+) serves as cofactor.

It localises to the cytoplasm. Exhibits a very high intrinsic GTPase hydrolysis rate. Involved in the addition of a carboxymethylaminomethyl (cmnm) group at the wobble position (U34) of certain tRNAs, forming tRNA-cmnm(5)s(2)U34. The sequence is that of tRNA modification GTPase MnmE from Erythrobacter litoralis (strain HTCC2594).